A 618-amino-acid polypeptide reads, in one-letter code: Chaperone protein HtpG (618 aa).

The tract at residues 1-331 (MAKHTFQTEV…SEDLPLNVSR (331 aa)) is a; substrate-binding. A b region spans residues 332-541 (EILQQNRILA…EDDPNFAMIK (210 aa)). The segment at 542–618 (MMRQMGNALG…RLNAMLERAI (77 aa)) is c.

Belongs to the heat shock protein 90 family. As to quaternary structure, homodimer.

The protein resides in the cytoplasm. Molecular chaperone. Has ATPase activity. The polypeptide is Chaperone protein HtpG (Wolinella succinogenes (strain ATCC 29543 / DSM 1740 / CCUG 13145 / JCM 31913 / LMG 7466 / NCTC 11488 / FDC 602W) (Vibrio succinogenes)).